The following is a 294-amino-acid chain: 4-hydroxy-tetrahydrodipicolinate synthase (294 aa).

S47 serves as a coordination point for pyruvate. Residue Y135 is the Proton donor/acceptor of the active site. Catalysis depends on K163, which acts as the Schiff-base intermediate with substrate. A pyruvate-binding site is contributed by I205.

It belongs to the DapA family. In terms of assembly, homotetramer; dimer of dimers.

Its subcellular location is the cytoplasm. The catalysed reaction is L-aspartate 4-semialdehyde + pyruvate = (2S,4S)-4-hydroxy-2,3,4,5-tetrahydrodipicolinate + H2O + H(+). Its pathway is amino-acid biosynthesis; L-lysine biosynthesis via DAP pathway; (S)-tetrahydrodipicolinate from L-aspartate: step 3/4. Its function is as follows. Catalyzes the condensation of (S)-aspartate-beta-semialdehyde [(S)-ASA] and pyruvate to 4-hydroxy-tetrahydrodipicolinate (HTPA). The chain is 4-hydroxy-tetrahydrodipicolinate synthase from Ralstonia nicotianae (strain ATCC BAA-1114 / GMI1000) (Ralstonia solanacearum).